Consider the following 498-residue polypeptide: ATP synthase subunit beta, chloroplastic (498 aa).

An ATP-binding site is contributed by 172-179 (GGAGVGKT).

Belongs to the ATPase alpha/beta chains family. F-type ATPases have 2 components, CF(1) - the catalytic core - and CF(0) - the membrane proton channel. CF(1) has five subunits: alpha(3), beta(3), gamma(1), delta(1), epsilon(1). CF(0) has four main subunits: a(1), b(1), b'(1) and c(9-12).

Its subcellular location is the plastid. It is found in the chloroplast thylakoid membrane. It carries out the reaction ATP + H2O + 4 H(+)(in) = ADP + phosphate + 5 H(+)(out). In terms of biological role, produces ATP from ADP in the presence of a proton gradient across the membrane. The catalytic sites are hosted primarily by the beta subunits. This is ATP synthase subunit beta, chloroplastic from Daucus carota (Wild carrot).